Reading from the N-terminus, the 231-residue chain is Probable intron-encoded endonuclease 1 (231 aa).

It belongs to the LAGLIDADG endonuclease family.

Its subcellular location is the mitochondrion. Its function is as follows. Endonuclease involved in mitochondrial 21S rRNA gene intron homing. The protein is Probable intron-encoded endonuclease 1 of Wickerhamomyces canadensis (Yeast).